A 329-amino-acid polypeptide reads, in one-letter code: Homeobox protein Nkx-3.2 (329 aa).

Residues 107–188 form a disordered region; sequence GLGSPCGGAP…PDPSPPDEDP (82 aa). Residues 110–124 are compositionally biased toward gly residues; that stretch reads SPCGGAPGAGAGGEP. The span at 138–160 shows a compositional bias: basic and acidic residues; sequence ELGRPGDIGERKKQRPLEARAKG. The homeobox DNA-binding region spans 202–261; it reads KKRSRAAFSHAQVFELERRFNHQRYLSGPERADLAASLKLTETQVKIWFQNRRYKTKRRQ.

The protein belongs to the NK-3 homeobox family. As to expression, first expressed in developing facial cartilage in early tailbud embryos, with expression localized to the basihyobranchial, palatoquadrate and possibly Meckel's cartilages. Shortly after, a second area of expression is seen in the musculature of the anterior gut. During late embryogenesis, gut expression extends into hindgut tissues. In adults, expressed at a high level in the kidney, pancreas, spleen and stomach and at a slightly lower level in the intestine, skeletal muscle and tongue. Adult heart, liver and lung show little or no expression.

It is found in the nucleus. This is Homeobox protein Nkx-3.2 (nkx3-2) from Xenopus laevis (African clawed frog).